A 69-amino-acid polypeptide reads, in one-letter code: Large ribosomal subunit protein bL32c (69 aa).

This sequence belongs to the bacterial ribosomal protein bL32 family.

It localises to the plastid. The protein localises to the chloroplast. The polypeptide is Large ribosomal subunit protein bL32c (rpl32) (Anthoceros angustus (Hornwort)).